The sequence spans 96 residues: Protein RnfH (96 aa).

This sequence belongs to the UPF0125 (RnfH) family.

This chain is Protein RnfH, found in Shigella flexneri.